Reading from the N-terminus, the 79-residue chain is Large ribosomal subunit protein bL31 (79 aa).

It belongs to the bacterial ribosomal protein bL31 family. Type A subfamily. In terms of assembly, part of the 50S ribosomal subunit.

Its function is as follows. Binds the 23S rRNA. The sequence is that of Large ribosomal subunit protein bL31 from Synechococcus sp. (strain CC9902).